The chain runs to 428 residues: Nucleotidyltransferase MB21D2 (428 aa).

The tract at residues 366–389 is disordered; sequence QRRGSTTSIPSPQSDGGDPNQPDD. The span at 368–379 shows a compositional bias: polar residues; it reads RGSTTSIPSPQS. Thr372 is modified (phosphothreonine). Phosphoserine is present on residues Ser373, Ser376, and Ser379.

This sequence belongs to the mab-21 family.

Functionally, probable nucleotidyltransferase that catalyzes the formation of cyclic dinucleotide second messenger in response to some unknown stimulus. This Mus musculus (Mouse) protein is Nucleotidyltransferase MB21D2.